The sequence spans 1055 residues: Kinesin-like protein KIN-7D, mitochondrial (1055 aa).

A compositionally biased stretch (low complexity) spans 1 to 23; that stretch reads MASSSSRTRSSRPPSPASSTSSS. The interval 1-36 is disordered; sequence MASSSSRTRSSRPPSPASSTSSSHLSNRLIPRSNST. The transit peptide at 1 to 96 directs the protein to the mitochondrion; the sequence is MASSSSRTRS…PMDDTISSER (96 aa). The 318-residue stretch at 98-415 folds into the Kinesin motor domain; sequence SISVTVRFRP…LKFASRAKSI (318 aa). ATP is bound at residue 178–185; the sequence is GVTSSGKT. 3 coiled-coil regions span residues 419 to 503, 618 to 653, and 694 to 823; these read ASRN…ILVS, PENSQTQIQNLEREIHEKQRQMRGLEQLIIESGEAS, and LQEK…LAQT. Residues 826-856 are disordered; the sequence is PMNGVNRKYNDGARSGRKGRISSSRSSGDEF. Positions 880-911 form a coiled coil; that stretch reads LESALAEKEFIEDEYRKKAEEAKRREEALEND. The segment at 926 to 963 is disordered; it reads NGALPEPNGTDPGRELEKSQSHAVLKERQVSSAPRQPE. Positions 937 to 954 are enriched in basic and acidic residues; the sequence is PGRELEKSQSHAVLKERQ. The RING-type zinc finger occupies 1008-1043; sequence CKVCFESPTAAILLPCRHFCLCKSCSLACSECPICR.

The protein belongs to the TRAFAC class myosin-kinesin ATPase superfamily. Kinesin family. KIN-7 subfamily.

It localises to the mitochondrion. This chain is Kinesin-like protein KIN-7D, mitochondrial, found in Arabidopsis thaliana (Mouse-ear cress).